The sequence spans 146 residues: Probable gamma-secretase subunit PEN-2 (146 aa).

The interval 1–26 is disordered; sequence MEATRSDDPSLNPIRNRNPNPNPNPN. The Lumenal segment spans residues 1–61; it reads MEATRSDDPS…SVDYARRFYK (61 aa). Positions 9 to 19 are enriched in low complexity; sequence PSLNPIRNRNP. A helical membrane pass occupies residues 62 to 82; the sequence is FGFALLPWLWFVNCFYFWPVL. The Cytoplasmic segment spans residues 83–98; it reads RHSRAFPQIRNYVVRS. The helical transmembrane segment at 99–119 threads the bilayer; it reads AIGFSVFTALLSAWALTFSIG. At 120 to 146 the chain is on the lumenal side; it reads GEQLFGPLYDKLVMYNVADRLGLSGLA.

It belongs to the PEN-2 family. As to quaternary structure, probable component of the gamma-secretase complex, a complex composed of a presenilin homodimer, nicastrin, APH1 and PEN2.

The protein resides in the membrane. Its function is as follows. Probable subunit of the gamma-secretase complex, an endoprotease complex that catalyzes the intramembrane cleavage of integral membrane proteins such as Notch receptors. This is Probable gamma-secretase subunit PEN-2 from Arabidopsis thaliana (Mouse-ear cress).